We begin with the raw amino-acid sequence, 1049 residues long: Retinoblastoma-like protein 1 (1049 aa).

Phosphothreonine is present on residues Thr332, Thr369, and Thr385. The segment at 385–584 (TPVASATQSV…WEALRASANK (200 aa)) is domain A. The tract at residues 385-944 (TPVASATQSV…GRVKSFALKY (560 aa)) is pocket; binds T and E1A. The interval 585 to 779 (VPSCEEVIFP…TQDAPLTGIS (195 aa)) is spacer. Residues Ser640, Ser650, Ser748, and Ser761 each carry the phosphoserine modification. The tract at residues 780-944 (KPKRTGSLAL…GRVKSFALKY (165 aa)) is domain B. A phosphoserine mark is found at Ser959, Ser970, and Ser983. The residue at position 992 (Thr992) is a Phosphothreonine. 2 positions are modified to phosphoserine: Ser1004 and Ser1022.

Belongs to the retinoblastoma protein (RB) family. In terms of assembly, component of the DREAM complex (also named LINC complex) at least composed of E2F4, E2F5, LIN9, LIN37, LIN52, LIN54, MYBL1, MYBL2, RBL1, RBL2, RBBP4, TFDP1 and TFDP2. The complex exists in quiescent cells where it represses cell cycle-dependent genes. It dissociates in S phase when LIN9, LIN37, LIN52 and LIN54 form a subcomplex that binds to MYBL2. Interacts with AATF. Interacts with KDM5A. Interacts with KMT5B and KMT5C. Interacts with USP4. Interacts with RBBP9. In terms of processing, cell-cycle arrest properties are inactivated by phosphorylation on Thr-332, Ser-640, Ser-959 and Ser-970 by CDK4.

Its subcellular location is the nucleus. In terms of biological role, key regulator of entry into cell division. Directly involved in heterochromatin formation by maintaining overall chromatin structure and, in particular, that of constitutive heterochromatin by stabilizing histone methylation. Recruits and targets histone methyltransferases KMT5B and KMT5C, leading to epigenetic transcriptional repression. Controls histone H4 'Lys-20' trimethylation. Probably acts as a transcription repressor by recruiting chromatin-modifying enzymes to promoters. Potent inhibitor of E2F-mediated trans-activation. May act as a tumor suppressor. The protein is Retinoblastoma-like protein 1 of Rattus norvegicus (Rat).